Consider the following 450-residue polypeptide: Glutamate-1-semialdehyde 2,1-aminomutase (450 aa).

Lys262 is modified (N6-(pyridoxal phosphate)lysine).

It belongs to the class-III pyridoxal-phosphate-dependent aminotransferase family. HemL subfamily. In terms of assembly, homodimer. Requires pyridoxal 5'-phosphate as cofactor.

Its subcellular location is the cytoplasm. It catalyses the reaction (S)-4-amino-5-oxopentanoate = 5-aminolevulinate. The protein operates within porphyrin-containing compound metabolism; protoporphyrin-IX biosynthesis; 5-aminolevulinate from L-glutamyl-tRNA(Glu): step 2/2. In Campylobacter hominis (strain ATCC BAA-381 / DSM 21671 / CCUG 45161 / LMG 19568 / NCTC 13146 / CH001A), this protein is Glutamate-1-semialdehyde 2,1-aminomutase.